A 317-amino-acid chain; its full sequence is Signal recognition particle receptor FtsY (317 aa).

Residues 117 to 124 (GVNGVGKT), 199 to 203 (DTAGR), and 263 to 266 (TKLD) each bind GTP.

The protein belongs to the GTP-binding SRP family. FtsY subfamily. As to quaternary structure, part of the signal recognition particle protein translocation system, which is composed of SRP and FtsY.

The protein localises to the cell membrane. It is found in the cytoplasm. It carries out the reaction GTP + H2O = GDP + phosphate + H(+). Functionally, involved in targeting and insertion of nascent membrane proteins into the cytoplasmic membrane. Acts as a receptor for the complex formed by the signal recognition particle (SRP) and the ribosome-nascent chain (RNC). This is Signal recognition particle receptor FtsY from Deinococcus radiodurans (strain ATCC 13939 / DSM 20539 / JCM 16871 / CCUG 27074 / LMG 4051 / NBRC 15346 / NCIMB 9279 / VKM B-1422 / R1).